A 397-amino-acid chain; its full sequence is Chorismate synthase (397 aa).

NADP(+) is bound by residues Arg-40 and Arg-46. Residues 129–131, 257–258, Gly-302, 317–321, and Arg-343 each bind FMN; these read RAS, QA, and KPIAT.

It belongs to the chorismate synthase family. As to quaternary structure, homotetramer. The cofactor is FMNH2.

It carries out the reaction 5-O-(1-carboxyvinyl)-3-phosphoshikimate = chorismate + phosphate. Its pathway is metabolic intermediate biosynthesis; chorismate biosynthesis; chorismate from D-erythrose 4-phosphate and phosphoenolpyruvate: step 7/7. Functionally, catalyzes the anti-1,4-elimination of the C-3 phosphate and the C-6 proR hydrogen from 5-enolpyruvylshikimate-3-phosphate (EPSP) to yield chorismate, which is the branch point compound that serves as the starting substrate for the three terminal pathways of aromatic amino acid biosynthesis. This reaction introduces a second double bond into the aromatic ring system. The protein is Chorismate synthase of Chlorobium phaeobacteroides (strain BS1).